The following is a 391-amino-acid chain: Inactive polyketide synthase 2 (391 aa).

C164 is an active-site residue.

Belongs to the thiolase-like superfamily. Chalcone/stilbene synthases family. As to quaternary structure, homodimer.

The chain is Inactive polyketide synthase 2 (PKS2) from Rubus idaeus (Raspberry).